The following is a 429-amino-acid chain: Protein ABERRANT PANICLE ORGANIZATION 1 (429 aa).

Residues 1 to 11 (MMNPRRLPPLP) show a composition bias toward pro residues. The interval 1 to 21 (MMNPRRLPPLPSSTSSASAAD) is disordered. Residues 25–71 (PRVWRRLPQPLVDRVLACLPTPSFLRLRAACRRFYHLLFSSPFLHSH) enclose the F-box domain. Helical transmembrane passes span 72–92 (LLLS…GHLL) and 112–132 (VAGG…LAFL). 3 Kelch repeats span residues 229–277 (MAFA…ELGG), 284–339 (RVAL…AEGG), and 350–397 (YVVL…GAAG).

As to quaternary structure, part of a putative SCF (ASK/Cullin/F-box) ubiquitin ligase complex. Interacts with FL/APO2. As to expression, expressed in seedlings, roots, leaves, shoot apical meristem (SAM), developing panicles, and, at lower levels, in developing seeds.

The protein resides in the membrane. It participates in protein modification; protein ubiquitination. In terms of biological role, component of SCF(ASK-cullin-F-box) E3 ubiquitin ligase complexes, which may mediate the ubiquitination and subsequent proteasomal degradation of target proteins. Together with FL/APO2, involved in the temporal regulation of meristem identity during both vegetative and reproductive developments in an APO2-dependent manner. Promotes spikelet formation by suppressing the precocious conversion of inflorescence meristems to spikelet meristems, probably via a positive regulation of class-C floral homeotic genes, but not of class-B genes, and through the control of cell proliferation in meristems. Mediates culm development and strength/diameter enhancement at internodes. Required for the regulation of the plastochron, floral organ identity, and floral determinacy. Controls the number of primary rachis branches (PRBs). May trigger the formation of vascular bundle systems which, consequently, promote carbohydrate translocation to panicles. Involved in ozone-induced grain yield regulation. This chain is Protein ABERRANT PANICLE ORGANIZATION 1, found in Oryza sativa subsp. indica (Rice).